Consider the following 2208-residue polypeptide: Glutamate synthase 1 [NADH], chloroplastic (2208 aa).

Residues 1 to 49 (MSAASSSSVLHLRTNQQLLSLRSLKNSTSVASQLAVTSGVSRRRSCTAR) constitute a chloroplast transit peptide. Residue Cys117 is the Nucleophile of the active site. Residues 117–521 (CGVGFVAELS…PGMMLLVDFE (405 aa)) form the Glutamine amidotransferase type-2 domain. The interval 1040–1067 (GKSNTGEGGELPSRMEPLADGSRNPKRS) is disordered. Residue 1211 to 1268 (LAETHQTLVANDLRGRTVLQTDGQLKTGRDVAVAALLGAEEFGFSTAPLITLGCIMMR) participates in FMN binding. [3Fe-4S] cluster-binding residues include Cys1264, Cys1270, and Cys1275. Residue 1995 to 2009 (GGGDTGTDCIGTSIR) participates in NAD(+) binding.

Belongs to the glutamate synthase family. As to quaternary structure, monomer. It depends on [3Fe-4S] cluster as a cofactor. FAD serves as cofactor. Requires FMN as cofactor. In terms of tissue distribution, highly expressed in roots and at low levels in leaves.

It localises to the plastid. The protein resides in the chloroplast. It carries out the reaction 2 L-glutamate + NAD(+) = L-glutamine + 2-oxoglutarate + NADH + H(+). Its pathway is amino-acid biosynthesis; L-glutamate biosynthesis via GLT pathway; L-glutamate from 2-oxoglutarate and L-glutamine (NAD(+) route): step 1/1. It participates in energy metabolism; nitrogen metabolism. Functionally, involved in glutamate biosynthesis. Required for non-photorespiratory ammonium assimilation. Probably involved in primary ammonium assimilation in roots. This Arabidopsis thaliana (Mouse-ear cress) protein is Glutamate synthase 1 [NADH], chloroplastic (GLT1).